The chain runs to 599 residues: Elongation factor 4 (599 aa).

The region spanning D4–R186 is the tr-type G domain. GTP-binding positions include D16 to T21 and N133 to D136.

It belongs to the TRAFAC class translation factor GTPase superfamily. Classic translation factor GTPase family. LepA subfamily.

Its subcellular location is the cell inner membrane. The catalysed reaction is GTP + H2O = GDP + phosphate + H(+). Its function is as follows. Required for accurate and efficient protein synthesis under certain stress conditions. May act as a fidelity factor of the translation reaction, by catalyzing a one-codon backward translocation of tRNAs on improperly translocated ribosomes. Back-translocation proceeds from a post-translocation (POST) complex to a pre-translocation (PRE) complex, thus giving elongation factor G a second chance to translocate the tRNAs correctly. Binds to ribosomes in a GTP-dependent manner. The sequence is that of Elongation factor 4 from Geotalea daltonii (strain DSM 22248 / JCM 15807 / FRC-32) (Geobacter daltonii).